A 425-amino-acid polypeptide reads, in one-letter code: 2-methylserine hydroxymethyltransferase (425 aa).

Residues leucine 126 and 130–132 (GHL) contribute to the (6S)-5,6,7,8-tetrahydrofolate site. At lysine 235 the chain carries N6-(pyridoxal phosphate)lysine.

The protein belongs to the SHMT family. In terms of assembly, homodimer. Requires pyridoxal 5'-phosphate as cofactor.

The protein localises to the cytoplasm. The catalysed reaction is (6R)-5,10-methylene-5,6,7,8-tetrahydrofolate + D-alanine + H2O = 2-methylserine + (6S)-5,6,7,8-tetrahydrofolate. It participates in one-carbon metabolism; tetrahydrofolate interconversion. In terms of biological role, catalyzes the reversible interconversion of alpha-methyl-L-serine to D-alanine with tetrahydrofolate (THF) serving as the one-carbon carrier. Cannot use alpha-methyl-D-serine, L-serine, D-serine or L-alanine. The sequence is that of 2-methylserine hydroxymethyltransferase from Aminobacter sp.